The sequence spans 374 residues: Methylthioribose-1-phosphate isomerase (374 aa).

Aspartate 251 acts as the Proton donor in catalysis.

It belongs to the eIF-2B alpha/beta/delta subunits family. MtnA subfamily.

It is found in the cytoplasm. Its subcellular location is the nucleus. The catalysed reaction is 5-(methylsulfanyl)-alpha-D-ribose 1-phosphate = 5-(methylsulfanyl)-D-ribulose 1-phosphate. Its pathway is amino-acid biosynthesis; L-methionine biosynthesis via salvage pathway; L-methionine from S-methyl-5-thio-alpha-D-ribose 1-phosphate: step 1/6. Functionally, catalyzes the interconversion of methylthioribose-1-phosphate (MTR-1-P) into methylthioribulose-1-phosphate (MTRu-1-P). In Oryza sativa subsp. japonica (Rice), this protein is Methylthioribose-1-phosphate isomerase (IDI2).